The chain runs to 269 residues: Rhamnulose-1-phosphate aldolase (269 aa).

Residue glutamate 119 is part of the active site. Zn(2+)-binding residues include histidine 142, histidine 144, and histidine 214.

It belongs to the aldolase class II family. RhaD subfamily. It depends on Zn(2+) as a cofactor.

Its subcellular location is the cytoplasm. It carries out the reaction L-rhamnulose 1-phosphate = (S)-lactaldehyde + dihydroxyacetone phosphate. It participates in carbohydrate degradation; L-rhamnose degradation; glycerone phosphate from L-rhamnose: step 3/3. Functionally, catalyzes the reversible cleavage of L-rhamnulose-1-phosphate to dihydroxyacetone phosphate (DHAP) and L-lactaldehyde. The polypeptide is Rhamnulose-1-phosphate aldolase (Bacteroides thetaiotaomicron (strain ATCC 29148 / DSM 2079 / JCM 5827 / CCUG 10774 / NCTC 10582 / VPI-5482 / E50)).